The following is a 144-amino-acid chain: Transcription antitermination protein NusB (144 aa).

Belongs to the NusB family.

In terms of biological role, involved in transcription antitermination. Required for transcription of ribosomal RNA (rRNA) genes. Binds specifically to the boxA antiterminator sequence of the ribosomal RNA (rrn) operons. The sequence is that of Transcription antitermination protein NusB from Streptococcus agalactiae serotype Ia (strain ATCC 27591 / A909 / CDC SS700).